We begin with the raw amino-acid sequence, 267 residues long: Small ribosomal subunit protein uS2 (267 aa).

Residues 247–267 are disordered; the sequence is LEDDILEDVEDEEEGDPEQGE.

Belongs to the universal ribosomal protein uS2 family.

This Synechococcus sp. (strain JA-3-3Ab) (Cyanobacteria bacterium Yellowstone A-Prime) protein is Small ribosomal subunit protein uS2.